A 68-amino-acid polypeptide reads, in one-letter code: Large ribosomal subunit protein bL31 (68 aa).

4 residues coordinate Zn(2+): C16, C18, C37, and C40.

It belongs to the bacterial ribosomal protein bL31 family. Type A subfamily. In terms of assembly, part of the 50S ribosomal subunit. Requires Zn(2+) as cofactor.

Binds the 23S rRNA. This Acidithiobacillus ferrooxidans (strain ATCC 23270 / DSM 14882 / CIP 104768 / NCIMB 8455) (Ferrobacillus ferrooxidans (strain ATCC 23270)) protein is Large ribosomal subunit protein bL31.